The following is a 172-amino-acid chain: 3-hydroxydecanoyl-[acyl-carrier-protein] dehydratase (172 aa).

The active site involves histidine 71.

The protein belongs to the thioester dehydratase family. FabA subfamily. In terms of assembly, homodimer.

The protein localises to the cytoplasm. It carries out the reaction a (3R)-hydroxyacyl-[ACP] = a (2E)-enoyl-[ACP] + H2O. It catalyses the reaction (3R)-hydroxydecanoyl-[ACP] = (2E)-decenoyl-[ACP] + H2O. The catalysed reaction is (2E)-decenoyl-[ACP] = (3Z)-decenoyl-[ACP]. Its pathway is lipid metabolism; fatty acid biosynthesis. In terms of biological role, necessary for the introduction of cis unsaturation into fatty acids. Catalyzes the dehydration of (3R)-3-hydroxydecanoyl-ACP to E-(2)-decenoyl-ACP and then its isomerization to Z-(3)-decenoyl-ACP. Can catalyze the dehydratase reaction for beta-hydroxyacyl-ACPs with saturated chain lengths up to 16:0, being most active on intermediate chain length. The chain is 3-hydroxydecanoyl-[acyl-carrier-protein] dehydratase from Blochmanniella pennsylvanica (strain BPEN).